Reading from the N-terminus, the 112-residue chain is Prothymosin alpha-B (112 aa).

The disordered stretch occupies residues 1-112 (MSDTAVDASV…TKKQKTDEDD (112 aa)). Basic and acidic residues predominate over residues 9–35 (SVEKSTKDLKAKEKEVVEEAENGKDKP). Composition is skewed to acidic residues over residues 41–83 (ENEE…DEVE) and 92–101 (EDDEDDDDDV). Over residues 102-112 (ETKKQKTDEDD) the composition is skewed to basic and acidic residues.

This sequence belongs to the pro/parathymosin family.

It localises to the nucleus. In Xenopus laevis (African clawed frog), this protein is Prothymosin alpha-B (ptma-b).